A 287-amino-acid chain; its full sequence is NADH-cytochrome b5 reductase 1 (287 aa).

The chain crosses the membrane as a helical span at residues 5–25; sequence FEALVTALVLAVSFIFIYGKF. Residues 41–145 enclose the FAD-binding FR-type domain; that stretch reads KDWQEFSLLT…RGPKGFYHYE (105 aa). FAD-binding positions include 125 to 142 and 151 to 183; these read AELAIGDRIKVRGPKGFY and EIGMIAGGTGISPMYQIIRAIFSNPRDKTRVCL.

It belongs to the flavoprotein pyridine nucleotide cytochrome reductase family. Monomer. Component of the 2-(3-amino-3-carboxypropyl)histidine synthase complex composed of DPH1, DPH2, DPH3 and a NADH-dependent reductase, predominantly CBR1. Requires FAD as cofactor.

The protein localises to the mitochondrion outer membrane. It catalyses the reaction 2 Fe(III)-[cytochrome b5] + NADH = 2 Fe(II)-[cytochrome b5] + NAD(+) + H(+). It carries out the reaction 2 Fe(3+)-[Dph3] + NADH = 2 Fe(2+)-[Dph3] + NAD(+) + H(+). It functions in the pathway protein modification; peptidyl-diphthamide biosynthesis. NADH-dependent reductase for DPH3 and cytochrome b5. Required for the first step of diphthamide biosynthesis, a post-translational modification of histidine which occurs in elongation factor 2. DPH1 and DPH2 transfer a 3-amino-3-carboxypropyl (ACP) group from S-adenosyl-L-methionine (SAM) to a histidine residue, the reaction is assisted by a reduction system comprising DPH3 and a NADH-dependent reductase, predominantly CBR1. By reducing DPH3, also involved in the formation of the tRNA wobble base modification mcm5s 2U (5-methoxycarbonylmethyl-2-thiouridine), mediated by the elongator complex. The cytochrome b5/NADH cytochrome b5 reductase electron transfer system supports the catalytic activity of several sterol biosynthetic enzymes. The sequence is that of NADH-cytochrome b5 reductase 1 (CBR1) from Eremothecium gossypii (strain ATCC 10895 / CBS 109.51 / FGSC 9923 / NRRL Y-1056) (Yeast).